A 412-amino-acid chain; its full sequence is tRNA pseudouridine synthase Pus10 (412 aa).

Residues His-73–Pro-197 form the THUMP domain. Substrate contacts are provided by Tyr-308 and Tyr-376.

The protein belongs to the pseudouridine synthase Pus10 family.

The catalysed reaction is uridine(54) in tRNA = pseudouridine(54) in tRNA. The enzyme catalyses uridine(55) in tRNA = pseudouridine(55) in tRNA. Responsible for synthesis of pseudouridine from uracil-54 and uracil-55 in the psi GC loop of transfer RNAs. This is tRNA pseudouridine synthase Pus10 from Vulcanisaeta distributa (strain DSM 14429 / JCM 11212 / NBRC 100878 / IC-017).